The primary structure comprises 76 residues: Sec-independent protein translocase protein TatA (76 aa).

A helical membrane pass occupies residues 1-21 (MGGLSIWHWLIVLLIVALVFG). The tract at residues 43-76 (MKDGDAPADAQQLPRSGTVDVNAKEATRSDSNKA) is disordered. Positions 64–76 (NAKEATRSDSNKA) are enriched in basic and acidic residues.

This sequence belongs to the TatA/E family. The Tat system comprises two distinct complexes: a TatABC complex, containing multiple copies of TatA, TatB and TatC subunits, and a separate TatA complex, containing only TatA subunits. Substrates initially bind to the TatABC complex, which probably triggers association of the separate TatA complex to form the active translocon.

It is found in the cell inner membrane. Its function is as follows. Part of the twin-arginine translocation (Tat) system that transports large folded proteins containing a characteristic twin-arginine motif in their signal peptide across membranes. TatA could form the protein-conducting channel of the Tat system. The protein is Sec-independent protein translocase protein TatA of Burkholderia multivorans (strain ATCC 17616 / 249).